Reading from the N-terminus, the 428-residue chain is Tyrosine--tRNA ligase (428 aa).

Y36 is a binding site for L-tyrosine. The 'HIGH' region motif lies at 41 to 50 (PTARSLHIGS). L-tyrosine contacts are provided by Y169 and Q173. The 'KMSKS' region motif lies at 229–233 (KMGKT). K232 is a binding site for ATP. Residues 361-427 (IPAYEIMHEC…GKKKYMIIKV (67 aa)) enclose the S4 RNA-binding domain.

Belongs to the class-I aminoacyl-tRNA synthetase family. TyrS type 1 subfamily. As to quaternary structure, homodimer.

It localises to the cytoplasm. It catalyses the reaction tRNA(Tyr) + L-tyrosine + ATP = L-tyrosyl-tRNA(Tyr) + AMP + diphosphate + H(+). Catalyzes the attachment of tyrosine to tRNA(Tyr) in a two-step reaction: tyrosine is first activated by ATP to form Tyr-AMP and then transferred to the acceptor end of tRNA(Tyr). The polypeptide is Tyrosine--tRNA ligase (Syntrophus aciditrophicus (strain SB)).